Reading from the N-terminus, the 86-residue chain is Progonadoliberin-2 (86 aa).

Residues 1–24 (MVHICRLLVLMGMLLCLSAQFASS) form the signal peptide. Position 25 is a pyrrolidone carboxylic acid (Gln-25). The residue at position 34 (Gly-34) is a Glycine amide.

This sequence belongs to the GnRH family.

Its subcellular location is the secreted. Functionally, stimulates the secretion of gonadotropins. The protein is Progonadoliberin-2 (gnrh2) of Rutilus rutilus (Roach).